The following is a 219-amino-acid chain: Ras-related protein Rab-3B (219 aa).

N-acetylalanine is present on Ala2. Residues Ser31, Ser32, Val33, Gly34, Lys35, Thr36, Ser37, Pro49, and Ser53 each coordinate GTP. Thr36 is a Mg(2+) binding site. Residues 45 to 58 (DTFTPAFVSTVGID) carry the Switch 1 motif. The Mg(2+) site is built by Thr54 and Asp77. Residues 78 to 96 (TAGQERYRTITTAYYRGAM) carry the Switch 2 motif. Position 80 (Gly80) interacts with GTP. Phosphothreonine is present on Thr86. Asn135, Lys136, Asp138, Ala166, and Lys167 together coordinate GTP. Phosphoserine is present on residues Ser188 and Ser190. S-geranylgeranyl cysteine attachment occurs at residues Cys217 and Cys219. Cys219 carries the cysteine methyl ester modification.

Belongs to the small GTPase superfamily. Rab family. Interacts with RIMS1, RIMS2, RPH3A and RPH3AL. The GTP-bound form interacts with GAS8/DRC4 (via coiled-coil domains). Interacts with GDI2, CHM and CHML; phosphorylation at Thr-86 disrupts these interactions. Interacts with MADD (via uDENN domain); the GTP-bound form is preferred for interaction. Mg(2+) is required as a cofactor. Post-translationally, phosphorylation of Thr-86 in the switch II region by LRRK2 prevents the association of RAB regulatory proteins, including CHM, CHML and RAB GDP dissociation inhibitor GDI2.

It is found in the cell membrane. Its subcellular location is the golgi apparatus. The enzyme catalyses GTP + H2O = GDP + phosphate + H(+). Regulated by guanine nucleotide exchange factors (GEFs) which promote the exchange of bound GDP for free GTP. Regulated by GTPase activating proteins (GAPs) which increase the GTP hydrolysis activity. Inhibited by GDP dissociation inhibitors (GDIs) which prevent Rab-GDP dissociation. Its function is as follows. The small GTPases Rab are key regulators of intracellular membrane trafficking, from the formation of transport vesicles to their fusion with membranes. Rabs cycle between an inactive GDP-bound form and an active GTP-bound form that is able to recruit to membranes different sets of downstream effectors directly responsible for vesicle formation, movement, tethering and fusion. This chain is Ras-related protein Rab-3B (RAB3B), found in Mesocricetus auratus (Golden hamster).